A 354-amino-acid polypeptide reads, in one-letter code: Ion-translocating oxidoreductase complex subunit D (354 aa).

4 consecutive transmembrane segments (helical) span residues 19-39 (IMLL…YYFG), 40-60 (FGVL…EFLV), 77-99 (AAVT…LSFF), and 119-139 (IFNP…ILMT). Thr-187 is modified (FMN phosphoryl threonine). 5 helical membrane-spanning segments follow: residues 221–241 (WISI…FNVI), 245–265 (IPVS…YFFK), 268–288 (MYYP…FFIA), 295–315 (SITK…IWLI), and 319–339 (GNYP…VPLI).

The protein belongs to the NqrB/RnfD family. As to quaternary structure, the complex is composed of six subunits: RnfA, RnfB, RnfC, RnfD, RnfE and RnfG. FMN is required as a cofactor.

It is found in the cell inner membrane. Part of a membrane-bound complex that couples electron transfer with translocation of ions across the membrane. The chain is Ion-translocating oxidoreductase complex subunit D from Buchnera aphidicola subsp. Baizongia pistaciae (strain Bp).